The chain runs to 159 residues: SsrA-binding protein (159 aa).

A disordered region spans residues 134-159; that stretch reads KLHDKRETSKERDWNRQKNRLLKERG. The segment covering 137 to 159 has biased composition (basic and acidic residues); sequence DKRETSKERDWNRQKNRLLKERG.

It belongs to the SmpB family.

It localises to the cytoplasm. Required for rescue of stalled ribosomes mediated by trans-translation. Binds to transfer-messenger RNA (tmRNA), required for stable association of tmRNA with ribosomes. tmRNA and SmpB together mimic tRNA shape, replacing the anticodon stem-loop with SmpB. tmRNA is encoded by the ssrA gene; the 2 termini fold to resemble tRNA(Ala) and it encodes a 'tag peptide', a short internal open reading frame. During trans-translation Ala-aminoacylated tmRNA acts like a tRNA, entering the A-site of stalled ribosomes, displacing the stalled mRNA. The ribosome then switches to translate the ORF on the tmRNA; the nascent peptide is terminated with the 'tag peptide' encoded by the tmRNA and targeted for degradation. The ribosome is freed to recommence translation, which seems to be the essential function of trans-translation. The polypeptide is SsrA-binding protein (Sinorhizobium fredii (strain NBRC 101917 / NGR234)).